The primary structure comprises 178 residues: Caveolin-1 (178 aa).

Ser-2 is modified (N-acetylserine). Ser-2 carries the phosphoserine modification. The interval 2–94 (SGGKYVDAEG…WKASFTTFTV (93 aa)) is required for homooligomerization. Over 2-104 (SGGKYVDAEG…TKYWFYRLLS (103 aa)) the chain is Cytoplasmic. N6-acetyllysine; alternate is present on Lys-5. A Glycyl lysine isopeptide (Lys-Gly) (interchain with G-Cter in ubiquitin); alternate cross-link involves residue Lys-5. Position 6 is a phosphotyrosine (Tyr-6). Tyr-14 bears the Phosphotyrosine; by ABL1 mark. A Phosphotyrosine modification is found at Tyr-25. Glycyl lysine isopeptide (Lys-Gly) (interchain with G-Cter in ubiquitin) cross-links involve residues Lys-26, Lys-30, Lys-39, Lys-47, and Lys-57. Positions 82-94 (DGIWKASFTTFTV) are interaction with CAVIN3. An intramembrane region (helical) is located at residues 105–125 (ALLGIPLALLWGIYFAILSFL). At 126-178 (HIWAVVPCIRSYLIEIQCISRVYSICIHTFCDPLFEAIGKVFSNIRATVQKEI) the chain is on the cytoplasmic side. An interacts with SPRY1, SPRY2, SPRY3 and SPRY4 region spans residues 131–142 (VPCIRSYLIEIQ). S-palmitoyl cysteine attachment occurs at residues Cys-133, Cys-143, and Cys-156. The interval 149–160 (SICIHTFCDPLF) is interacts with SPRY1, SPRY2, and SPRY4. Positions 167 to 178 (FSNIRATVQKEI) are interacts with SPRY1, SPRY2, SPRY3 and SPRY4.

Belongs to the caveolin family. In terms of assembly, homooligomer. Interacts with GLIPR2. Interacts with NOSTRIN. Interacts with SNAP25 and STX1A. Interacts (via the N-terminus) with DPP4; the interaction is direct. Interacts with CTNNB1, CDH1 and JUP. Interacts with PACSIN2; this interaction induces membrane tubulation. Interacts with SLC7A9. Interacts with BMX and BTK. Interacts with TGFBR1. Interacts with CAVIN3 (via leucine-zipper domain) in a cholesterol-sensitive manner. Interacts with CAVIN1. Interacts with EHD2 in a cholesterol-dependent manner. Forms a ternary complex with UBXN6 and VCP; mediates CAV1 targeting to lysosomes for degradation. Interacts with ABCG1; this interaction regulates ABCG1-mediated cholesterol efflux. Interacts with NEU3; this interaction enhances NEU3 sialidase activity within caveola. Interacts (via C-terminus) with SPRY1, SPRY2 (via C-terminus), SPRY3, and SPRY4. Interacts with IGFBP5; this interaction allows trafficking of IGFBP5 from the plasma membrane to the nucleus. In terms of processing, phosphorylated at Tyr-14 by ABL1 in response to oxidative stress. Ubiquitinated. Undergo monoubiquitination and multi- and/or polyubiquitination. Monoubiquitination of N-terminal lysines promotes integration in a ternary complex with UBXN6 and VCP which promotes oligomeric CAV1 targeting to lysosomes for degradation. Ubiquitinated by ZNRF1; leading to degradation and modulation of the TLR4-mediated immune response.

It localises to the golgi apparatus membrane. Its subcellular location is the cell membrane. The protein localises to the membrane. It is found in the caveola. The protein resides in the membrane raft. In terms of biological role, may act as a scaffolding protein within caveolar membranes. Forms a stable heterooligomeric complex with CAV2 that targets to lipid rafts and drives caveolae formation. Mediates the recruitment of CAVIN proteins (CAVIN1/2/3/4) to the caveolae. Interacts directly with G-protein alpha subunits and can functionally regulate their activity. Involved in the costimulatory signal essential for T-cell receptor (TCR)-mediated T-cell activation. Its binding to DPP4 induces T-cell proliferation and NF-kappa-B activation in a T-cell receptor/CD3-dependent manner. Recruits CTNNB1 to caveolar membranes and may regulate CTNNB1-mediated signaling through the Wnt pathway. Negatively regulates TGFB1-mediated activation of SMAD2/3 by mediating the internalization of TGFBR1 from membrane rafts leading to its subsequent degradation. Binds 20(S)-hydroxycholesterol (20(S)-OHC). The protein is Caveolin-1 (CAV1) of Ornithorhynchus anatinus (Duckbill platypus).